The primary structure comprises 428 residues: Glutamate-1-semialdehyde 2,1-aminomutase (428 aa).

K265 carries the post-translational modification N6-(pyridoxal phosphate)lysine.

It belongs to the class-III pyridoxal-phosphate-dependent aminotransferase family. HemL subfamily. In terms of assembly, homodimer. The cofactor is pyridoxal 5'-phosphate.

Its subcellular location is the cytoplasm. It carries out the reaction (S)-4-amino-5-oxopentanoate = 5-aminolevulinate. It participates in porphyrin-containing compound metabolism; protoporphyrin-IX biosynthesis; 5-aminolevulinate from L-glutamyl-tRNA(Glu): step 2/2. The protein is Glutamate-1-semialdehyde 2,1-aminomutase of Ruthia magnifica subsp. Calyptogena magnifica.